The sequence spans 71 residues: SPbeta prophage-derived uncharacterized protein YopF (71 aa).

The sequence is that of SPbeta prophage-derived uncharacterized protein YopF (yopF) from Bacillus subtilis (strain 168).